Here is a 448-residue protein sequence, read N- to C-terminus: Methylenetetrahydrofolate--tRNA-(uracil-5-)-methyltransferase TrmFO (448 aa).

An FAD-binding site is contributed by 13–18; the sequence is GAGLAG.

This sequence belongs to the MnmG family. TrmFO subfamily. The cofactor is FAD.

The protein resides in the cytoplasm. It carries out the reaction uridine(54) in tRNA + (6R)-5,10-methylene-5,6,7,8-tetrahydrofolate + NADH + H(+) = 5-methyluridine(54) in tRNA + (6S)-5,6,7,8-tetrahydrofolate + NAD(+). It catalyses the reaction uridine(54) in tRNA + (6R)-5,10-methylene-5,6,7,8-tetrahydrofolate + NADPH + H(+) = 5-methyluridine(54) in tRNA + (6S)-5,6,7,8-tetrahydrofolate + NADP(+). Its function is as follows. Catalyzes the folate-dependent formation of 5-methyl-uridine at position 54 (M-5-U54) in all tRNAs. This Streptococcus pyogenes serotype M4 (strain MGAS10750) protein is Methylenetetrahydrofolate--tRNA-(uracil-5-)-methyltransferase TrmFO.